The sequence spans 350 residues: C5a anaphylatoxin chemotactic receptor 1 (350 aa).

Topologically, residues 1–37 (MDSFNYTTPDYGHYDDKDTLDLNTPVDKTSNTLRVPD) are extracellular. An N-linked (GlcNAc...) asparagine glycan is attached at asparagine 5. The segment at 10–18 (DYGHYDDKD) is required for CHIPS binding. Sulfotyrosine is present on residues tyrosine 11 and tyrosine 14. Residues 21 to 30 (DLNTPVDKTS) form an involved in C5a binding region. A helical membrane pass occupies residues 38–64 (ILALVIFAVVFLVGVLGNALVVWVTAF). Over 65 to 69 (EAKRT) the chain is Cytoplasmic. The chain crosses the membrane as a helical span at residues 70–93 (INAIWFLNLAVADFLSCLALPILF). Residues 94 to 110 (TSIVQHHHWPFGGAACS) are Extracellular-facing. Cysteines 109 and 188 form a disulfide. A helical membrane pass occupies residues 111–132 (ILPSLILLNMYASILLLATISA). Residues 133–153 (DRFLLVFKPIWCQNFRGAGLA) are Cytoplasmic-facing. Residues 154–174 (WIACAVAWGLALLLTIPSFLY) form a helical membrane-spanning segment. Over 175–200 (RVVREEYFPPKVLCGVDYSHDKRRER) the chain is Extracellular. A helical membrane pass occupies residues 201-226 (AVAIVRLVLGFLWPLLTLTICYTFIL). The Cytoplasmic portion of the chain corresponds to 227 to 242 (LRTWSRRATRSTKTLK). The helical transmembrane segment at 243–265 (VVVAVVASFFIFWLPYQVTGIMM) threads the bilayer. Residues 266-282 (SFLEPSSPTFLLLKKLD) lie on the Extracellular side of the membrane. A helical transmembrane segment spans residues 283 to 303 (SLCVSFAYINCCINPIIYVVA). The Cytoplasmic segment spans residues 304 to 350 (GQGFQGRLRKSLPSLLRNVLTEESVVRESKSFTRSTVDTMAQKTQAV). Phosphoserine occurs at positions 314, 317, 327, 332, 334, and 338.

It belongs to the G-protein coupled receptor 1 family. As to quaternary structure, homodimer. May also form higher-order oligomers. Interacts (when phosphorylated) with ARRB1 and ARRB2; the interaction is associated with internalization of C5aR. Interacts (via N-terminal domain) with S.aureus chemotaxis inhibitory protein (CHIPS); the interaction blocks the receptor and may thus inhibit the immune response. In terms of processing, sulfation plays a critical role in the association of C5aR with C5a, but no significant role in the ability of the receptor to transduce a signal and mobilize calcium in response to a small a small peptide agonist. Sulfation at Tyr-14 is important for CHIPS binding. Post-translationally, phosphorylated on serine residues in response to C5a binding, resulting in internalization of the receptor and short-term desensitization to the ligand. The key residues involved in this process are Ser-334 and Ser-338.

It is found in the cell membrane. The protein localises to the cytoplasmic vesicle. In terms of biological role, receptor for the chemotactic and inflammatory peptide anaphylatoxin C5a. The ligand interacts with at least two sites on the receptor: a high-affinity site on the extracellular N-terminus, and a second site in the transmembrane region which activates downstream signaling events. Receptor activation stimulates chemotaxis, granule enzyme release, intracellular calcium release and superoxide anion production. The chain is C5a anaphylatoxin chemotactic receptor 1 (C5AR1) from Homo sapiens (Human).